Reading from the N-terminus, the 313-residue chain is MSLRIVFLGSPTFAVLPLERLVADSRYQVVGVVTQPDRPAGRGKMPVATPVKQAALRLGLPVLTPETLRDPAAVADLADLRPDVGVVAAYGEILRRDVLAIPPLGYVNIHPSLLPLYRGPSPVAGAILNGDAETGVTIMVIEAKMDAGPILAQRVVPLPPDARTGSLTRELFAIGADMLLETLDAYATGAITPHPQDHARATFTKLLSREDGIIDWSQPALRIERMTRAYDPWPGATTTWRGAPLKIIAARVRSDRHSDAPPGTLLDTAEGLAVATGDGLLVLETVQPAGKRPLPAADWRRGVRLTGGERLGG.

112-115 provides a ligand contact to (6S)-5,6,7,8-tetrahydrofolate; that stretch reads SLLP.

This sequence belongs to the Fmt family.

The enzyme catalyses L-methionyl-tRNA(fMet) + (6R)-10-formyltetrahydrofolate = N-formyl-L-methionyl-tRNA(fMet) + (6S)-5,6,7,8-tetrahydrofolate + H(+). In terms of biological role, attaches a formyl group to the free amino group of methionyl-tRNA(fMet). The formyl group appears to play a dual role in the initiator identity of N-formylmethionyl-tRNA by promoting its recognition by IF2 and preventing the misappropriation of this tRNA by the elongation apparatus. In Roseiflexus castenholzii (strain DSM 13941 / HLO8), this protein is Methionyl-tRNA formyltransferase.